Consider the following 189-residue polypeptide: Protein GrpE (189 aa).

A disordered region spans residues 1 to 22; sequence MKEQQKETEQNIEEINDETVTE. The span at 10–22 shows a compositional bias: acidic residues; the sequence is QNIEEINDETVTE.

This sequence belongs to the GrpE family. Homodimer.

It localises to the cytoplasm. Its function is as follows. Participates actively in the response to hyperosmotic and heat shock by preventing the aggregation of stress-denatured proteins, in association with DnaK and GrpE. It is the nucleotide exchange factor for DnaK and may function as a thermosensor. Unfolded proteins bind initially to DnaJ; upon interaction with the DnaJ-bound protein, DnaK hydrolyzes its bound ATP, resulting in the formation of a stable complex. GrpE releases ADP from DnaK; ATP binding to DnaK triggers the release of the substrate protein, thus completing the reaction cycle. Several rounds of ATP-dependent interactions between DnaJ, DnaK and GrpE are required for fully efficient folding. The polypeptide is Protein GrpE (Leuconostoc citreum (strain KM20)).